Here is a 908-residue protein sequence, read N- to C-terminus: NADH-quinone oxidoreductase subunit G (908 aa).

Residues 2–83 (ATIHVDGKEY…GTFISIDDEE (82 aa)) form the 2Fe-2S ferredoxin-type domain. The [2Fe-2S] cluster site is built by Cys-34, Cys-45, Cys-48, and Cys-67. In terms of domain architecture, 4Fe-4S His(Cys)3-ligated-type spans 83-122 (EAKQFRESVVEWLMTNHPHDCPVCEEGGNCHLQDMTVMTG). [4Fe-4S] cluster contacts are provided by His-99, Cys-103, Cys-106, Cys-112, Cys-151, Cys-154, Cys-157, Cys-201, Cys-228, Cys-231, Cys-235, and Cys-263. One can recognise a 4Fe-4S Mo/W bis-MGD-type domain in the interval 221–277 (MQFAPSICQQCSIGCNISPGERYGELRRIENRYNGTVNHYFLCDRGRFGYGYVNLKD).

This sequence belongs to the complex I 75 kDa subunit family. As to quaternary structure, composed of 13 different subunits. Subunits NuoCD, E, F, and G constitute the peripheral sector of the complex. Requires [2Fe-2S] cluster as cofactor. [4Fe-4S] cluster serves as cofactor.

It catalyses the reaction a quinone + NADH + 5 H(+)(in) = a quinol + NAD(+) + 4 H(+)(out). NDH-1 shuttles electrons from NADH, via FMN and iron-sulfur (Fe-S) centers, to quinones in the respiratory chain. The immediate electron acceptor for the enzyme in this species is believed to be ubiquinone. Couples the redox reaction to proton translocation (for every two electrons transferred, four hydrogen ions are translocated across the cytoplasmic membrane), and thus conserves the redox energy in a proton gradient. This is NADH-quinone oxidoreductase subunit G (nuoG) from Escherichia coli O157:H7.